The following is a 231-amino-acid chain: uncharacterized protein (231 aa).

The span at 1–10 (MDGKKREVEN) shows a compositional bias: basic and acidic residues. Residues 1-35 (MDGKKREVENGKNGNNIKDGNSSNTTNYGKDTKTT) form a disordered region. A compositionally biased stretch (low complexity) spans 11 to 24 (GKNGNNIKDGNSSN). A compositionally biased stretch (polar residues) spans 25–35 (TTNYGKDTKTT).

This is an uncharacterized protein from Aquifex aeolicus (strain VF5).